The sequence spans 95 residues: Large ribosomal subunit protein uL23 (95 aa).

It belongs to the universal ribosomal protein uL23 family. Part of the 50S ribosomal subunit. Contacts protein L29, and trigger factor when it is bound to the ribosome.

One of the early assembly proteins it binds 23S rRNA. One of the proteins that surrounds the polypeptide exit tunnel on the outside of the ribosome. Forms the main docking site for trigger factor binding to the ribosome. In Pelotomaculum thermopropionicum (strain DSM 13744 / JCM 10971 / SI), this protein is Large ribosomal subunit protein uL23.